A 324-amino-acid polypeptide reads, in one-letter code: tRNA(Ile)-lysidine synthase (324 aa).

33–38 (SGGPDS) lines the ATP pocket.

The protein belongs to the tRNA(Ile)-lysidine synthase family.

The protein localises to the cytoplasm. It catalyses the reaction cytidine(34) in tRNA(Ile2) + L-lysine + ATP = lysidine(34) in tRNA(Ile2) + AMP + diphosphate + H(+). Ligates lysine onto the cytidine present at position 34 of the AUA codon-specific tRNA(Ile) that contains the anticodon CAU, in an ATP-dependent manner. Cytidine is converted to lysidine, thus changing the amino acid specificity of the tRNA from methionine to isoleucine. The chain is tRNA(Ile)-lysidine synthase from Thermobifida fusca (strain YX).